A 317-amino-acid chain; its full sequence is Large ribosomal subunit protein uL10z (317 aa).

The protein belongs to the universal ribosomal protein uL10 family. P0 forms a pentameric complex by interaction with dimers of P1 and P2. Post-translationally, phosphorylated.

Its function is as follows. Ribosomal protein P0 is the functional equivalent of E.coli protein L10. This chain is Large ribosomal subunit protein uL10z (RPP0A), found in Arabidopsis thaliana (Mouse-ear cress).